The chain runs to 322 residues: 4-hydroxy-3-methylbut-2-enyl diphosphate reductase (322 aa).

Cys15 serves as a coordination point for [4Fe-4S] cluster. The (2E)-4-hydroxy-3-methylbut-2-enyl diphosphate site is built by His44 and His77. Positions 44 and 77 each coordinate dimethylallyl diphosphate. Isopentenyl diphosphate contacts are provided by His44 and His77. Cys99 contributes to the [4Fe-4S] cluster binding site. His127 is a binding site for (2E)-4-hydroxy-3-methylbut-2-enyl diphosphate. His127 contacts dimethylallyl diphosphate. His127 contributes to the isopentenyl diphosphate binding site. Residue Glu129 is the Proton donor of the active site. Thr168 provides a ligand contact to (2E)-4-hydroxy-3-methylbut-2-enyl diphosphate. Cys198 contacts [4Fe-4S] cluster. Residues Ser226, Ser227, Asn228, and Ser270 each coordinate (2E)-4-hydroxy-3-methylbut-2-enyl diphosphate. Ser226, Ser227, Asn228, and Ser270 together coordinate dimethylallyl diphosphate. 4 residues coordinate isopentenyl diphosphate: Ser226, Ser227, Asn228, and Ser270.

It belongs to the IspH family. [4Fe-4S] cluster serves as cofactor.

It carries out the reaction isopentenyl diphosphate + 2 oxidized [2Fe-2S]-[ferredoxin] + H2O = (2E)-4-hydroxy-3-methylbut-2-enyl diphosphate + 2 reduced [2Fe-2S]-[ferredoxin] + 2 H(+). It catalyses the reaction dimethylallyl diphosphate + 2 oxidized [2Fe-2S]-[ferredoxin] + H2O = (2E)-4-hydroxy-3-methylbut-2-enyl diphosphate + 2 reduced [2Fe-2S]-[ferredoxin] + 2 H(+). Its pathway is isoprenoid biosynthesis; dimethylallyl diphosphate biosynthesis; dimethylallyl diphosphate from (2E)-4-hydroxy-3-methylbutenyl diphosphate: step 1/1. It participates in isoprenoid biosynthesis; isopentenyl diphosphate biosynthesis via DXP pathway; isopentenyl diphosphate from 1-deoxy-D-xylulose 5-phosphate: step 6/6. Catalyzes the conversion of 1-hydroxy-2-methyl-2-(E)-butenyl 4-diphosphate (HMBPP) into a mixture of isopentenyl diphosphate (IPP) and dimethylallyl diphosphate (DMAPP). Acts in the terminal step of the DOXP/MEP pathway for isoprenoid precursor biosynthesis. This is 4-hydroxy-3-methylbut-2-enyl diphosphate reductase from Neisseria meningitidis serogroup C (strain 053442).